Here is a 383-residue protein sequence, read N- to C-terminus: MTWQARIDAALRAREASHSLRRRVVCTPAPGGALVHQGVRYRNFSGNDYLGLSQHPALIAAWQQGAQTYGVGSGASGHVSGYSDAHQSLENALAHWLGFDRALLFISGFAANQAVVAALMQQSDRILADRLSHASLLEAASHSPATLRRFAHNDSGALAALLGKPCDGLTLVFTEGVFSMDGDSAPLADIAGIAQGAQTLLMVDDAHGVGVQGREGRGSCDVAGIRPDLLLVTFGKAFGLSGAALLCSAPMADYLLQTARHLIYSTAMPAAQACALNAALTVIREGDDLRARLARNIARFRAGAASLPLTLADSQTAIQPLIVGENSAALTLAEKLRERGCWVTAIRPPTVPAGTARLRLTLSAAHQDEDIDALLEALYDGCR.

R21 lines the substrate pocket. Pyridoxal 5'-phosphate is bound at residue 108 to 109; that stretch reads GF. Substrate is bound at residue H133. Pyridoxal 5'-phosphate is bound by residues S179, H207, and T233. K236 carries the post-translational modification N6-(pyridoxal phosphate)lysine. T350 contributes to the substrate binding site.

Belongs to the class-II pyridoxal-phosphate-dependent aminotransferase family. BioF subfamily. As to quaternary structure, homodimer. Requires pyridoxal 5'-phosphate as cofactor.

The catalysed reaction is 6-carboxyhexanoyl-[ACP] + L-alanine + H(+) = (8S)-8-amino-7-oxononanoate + holo-[ACP] + CO2. It participates in cofactor biosynthesis; biotin biosynthesis. Catalyzes the decarboxylative condensation of pimeloyl-[acyl-carrier protein] and L-alanine to produce 8-amino-7-oxononanoate (AON), [acyl-carrier protein], and carbon dioxide. The sequence is that of 8-amino-7-oxononanoate synthase from Cronobacter sakazakii (strain ATCC BAA-894) (Enterobacter sakazakii).